The sequence spans 663 residues: UvrABC system protein B (663 aa).

Positions 26-414 (DGLESGLAKQ…DNVAEQVVRP (389 aa)) constitute a Helicase ATP-binding domain. 39 to 46 (GVTGSGKT) serves as a coordination point for ATP. The Beta-hairpin signature appears at 92–115 (YYDYYQPEAYVPASDTFIEKDASI). The Helicase C-terminal domain occupies 430-596 (QVDDLMSEIR…GINKSVEDIL (167 aa)). A UVR domain is found at 624–659 (AKQINALEKQMYAHAQNMEFELAAKIRDEYLLLKEQ).

It belongs to the UvrB family. As to quaternary structure, forms a heterotetramer with UvrA during the search for lesions. Interacts with UvrC in an incision complex.

It localises to the cytoplasm. Its function is as follows. The UvrABC repair system catalyzes the recognition and processing of DNA lesions. A damage recognition complex composed of 2 UvrA and 2 UvrB subunits scans DNA for abnormalities. Upon binding of the UvrA(2)B(2) complex to a putative damaged site, the DNA wraps around one UvrB monomer. DNA wrap is dependent on ATP binding by UvrB and probably causes local melting of the DNA helix, facilitating insertion of UvrB beta-hairpin between the DNA strands. Then UvrB probes one DNA strand for the presence of a lesion. If a lesion is found the UvrA subunits dissociate and the UvrB-DNA preincision complex is formed. This complex is subsequently bound by UvrC and the second UvrB is released. If no lesion is found, the DNA wraps around the other UvrB subunit that will check the other stand for damage. The polypeptide is UvrABC system protein B (Legionella pneumophila (strain Lens)).